We begin with the raw amino-acid sequence, 375 residues long: Porin Omp2b (375 aa).

The signal sequence occupies residues 1–22; the sequence is MNIKSLLLGSAAALVAASGAQA.

The protein belongs to the alphaproteobacteria porin family. In terms of assembly, homotrimer.

The protein resides in the cell outer membrane. Its function is as follows. Forms passive diffusion pores that allow small molecular weight hydrophilic materials across the outer membrane. The chain is Porin Omp2b (omp2b) from Brucella suis.